The primary structure comprises 646 residues: Interferon-induced GTP-binding protein MxA (646 aa).

Residues 34-307 (DLALPAIAVI…LVHHIQKSLP (274 aa)) form the Dynamin-type G domain. Residues 44-51 (GDQSSGKS) form a G1 motif region. A GTP-binding site is contributed by 44–51 (GDQSSGKS). The interval 69–71 (VTR) is G2 motif. The G3 motif stretch occupies residues 145-148 (DLPG). Residues 145 to 149 (DLPGI) and 214 to 217 (TKPD) each bind GTP. Positions 214 to 217 (TKPD) are G4 motif. Residues 246–249 (RCRG) form a G5 motif region. Positions 546–637 (LREMRLHLKS…PLGHLLEVTF (92 aa)) constitute a GED domain.

This sequence belongs to the TRAFAC class dynamin-like GTPase superfamily. Dynamin/Fzo/YdjA family.

The protein resides in the cytoplasm. In Danio rerio (Zebrafish), this protein is Interferon-induced GTP-binding protein MxA (mxa).